The chain runs to 126 residues: Small ribosomal subunit protein uS11 (126 aa).

Belongs to the universal ribosomal protein uS11 family. Part of the 30S ribosomal subunit. Interacts with proteins S7 and S18. Binds to IF-3.

Located on the platform of the 30S subunit, it bridges several disparate RNA helices of the 16S rRNA. Forms part of the Shine-Dalgarno cleft in the 70S ribosome. This Orientia tsutsugamushi (strain Boryong) (Rickettsia tsutsugamushi) protein is Small ribosomal subunit protein uS11.